Here is a 596-residue protein sequence, read N- to C-terminus: Transcription factor IIIB 70 kDa subunit (596 aa).

A TFIIB-type zinc finger spans residues 1 to 33; it reads MPVCKNCHGTEFERDLSNANNDLVCKACGVVSE. Residues Cys-4, Cys-7, Cys-25, and Cys-28 each contribute to the Zn(2+) site. Tandem repeats lie at residues 90–166 and 185–264. Disordered regions lie at residues 363 to 421 and 509 to 534; these read GENI…NESG and IATG…EPTK. Over residues 365–375 the composition is skewed to basic and acidic residues; sequence NIYHEGSENET. Residues Ser-381 and Ser-384 each carry the phosphoserine modification. Positions 388–421 are enriched in basic and acidic residues; it reads EHVEGEDKETEGTEEKVKKVKTKTSEEKKENESG. Over residues 516–526 the composition is skewed to basic residues; it reads VKKKRTRRRNN.

This sequence belongs to the TFIIB family. As to quaternary structure, TFIIIB comprises the TATA-binding protein (TBP), the B-related factor (BRF) and the B' component (TFC5).

The protein localises to the nucleus. General activator of RNA polymerase III transcription. Interacts with TBP. Binds to Pol III subunit C34 and to the TAU135 component of TFIIIC. The polypeptide is Transcription factor IIIB 70 kDa subunit (BRF1) (Saccharomyces cerevisiae (strain ATCC 204508 / S288c) (Baker's yeast)).